The sequence spans 101 residues: Small ribosomal subunit protein bS18c (101 aa).

Residues 1–19 (MDKSKRPFRKSKRSFRKRL) show a composition bias toward basic residues. Residues 1–23 (MDKSKRPFRKSKRSFRKRLPPIG) form a disordered region.

The protein belongs to the bacterial ribosomal protein bS18 family. As to quaternary structure, part of the 30S ribosomal subunit.

It localises to the plastid. Its subcellular location is the chloroplast. The protein is Small ribosomal subunit protein bS18c of Chloranthus spicatus (Chulantree).